The chain runs to 342 residues: S-adenosylmethionine:tRNA ribosyltransferase-isomerase (342 aa).

The protein belongs to the QueA family. In terms of assembly, monomer.

It localises to the cytoplasm. It carries out the reaction 7-aminomethyl-7-carbaguanosine(34) in tRNA + S-adenosyl-L-methionine = epoxyqueuosine(34) in tRNA + adenine + L-methionine + 2 H(+). It participates in tRNA modification; tRNA-queuosine biosynthesis. Its function is as follows. Transfers and isomerizes the ribose moiety from AdoMet to the 7-aminomethyl group of 7-deazaguanine (preQ1-tRNA) to give epoxyqueuosine (oQ-tRNA). This Bacillus pumilus (strain SAFR-032) protein is S-adenosylmethionine:tRNA ribosyltransferase-isomerase.